We begin with the raw amino-acid sequence, 251 residues long: Probable transcriptional regulatory protein SYO3AOP1_0685 (251 aa).

Belongs to the TACO1 family.

The protein resides in the cytoplasm. This Sulfurihydrogenibium sp. (strain YO3AOP1) protein is Probable transcriptional regulatory protein SYO3AOP1_0685.